Here is a 365-residue protein sequence, read N- to C-terminus: c-di-GMP synthase (365 aa).

It belongs to the CD-NTase family. E subfamily.

It catalyses the reaction 2 GTP = 3',3'-c-di-GMP + 2 diphosphate. In terms of biological role, cyclic nucleotide synthase (second messenger synthase) of a CBASS antivirus system. CBASS (cyclic oligonucleotide-based antiphage signaling system) provides immunity against bacteriophage. The CD-NTase protein synthesizes cyclic nucleotides in response to infection; these serve as specific second messenger signals. The signals activate a diverse range of effectors, leading to bacterial cell death and thus abortive phage infection. A type I-D(GG) CBASS system. Cyclic dinucleotide synthase that catalyzes the synthesis of c-di-GMP, has no activity with other NTP substrates. The polypeptide is c-di-GMP synthase (Flavobacteriaceae sp. genome_bin_11).